The chain runs to 304 residues: uncharacterized protein (304 aa).

Coiled coils occupy residues 3–35 (KNQY…DKEI) and 89–132 (KSNK…NSNL). A disordered region spans residues 96-121 (LQNKQQENSEEKNSEEKNSEEKNSEE).

This is an uncharacterized protein from Acanthamoeba polyphaga (Amoeba).